The chain runs to 365 residues: DNA polymerase IV (365 aa).

One can recognise a UmuC domain in the interval 7–188 (IIHIDMDAFY…LPVNKFFGVG (182 aa)). Aspartate 11 and aspartate 106 together coordinate Mg(2+). Glutamate 107 is a catalytic residue.

This sequence belongs to the DNA polymerase type-Y family. In terms of assembly, monomer. Requires Mg(2+) as cofactor.

It is found in the cytoplasm. The enzyme catalyses DNA(n) + a 2'-deoxyribonucleoside 5'-triphosphate = DNA(n+1) + diphosphate. Poorly processive, error-prone DNA polymerase involved in untargeted mutagenesis. Copies undamaged DNA at stalled replication forks, which arise in vivo from mismatched or misaligned primer ends. These misaligned primers can be extended by PolIV. Exhibits no 3'-5' exonuclease (proofreading) activity. May be involved in translesional synthesis, in conjunction with the beta clamp from PolIII. The chain is DNA polymerase IV from Clostridioides difficile (strain 630) (Peptoclostridium difficile).